The sequence spans 267 residues: MNALLTNPFKERLCKGEVQIGLWLSSTTAYMAEIAATSGYDWLLIDGEHAPNTIQDLYHQLQAVAPYASQPVIRPVEGSKPLIKQVLDIGAQTLLLPMVDTADQARQVVSATRYPPYGERGVGASVARAARWGRIENYMAQVNDSLCLLVQVESKTALDNLDKILDVQGIDGVFIGPADLSASLGYPDNAGHLEVQRIIETSIRRIRDAGKAAGFLAVAPDMAQQCLAWGANFVAVGVDTMLYSDALDQRLAMFKSGKNGPRIKGSY.

Histidine 49 (proton acceptor) is an active-site residue. Glutamine 151 lines the substrate pocket. Glutamate 153 serves as a coordination point for Mg(2+). Substrate-binding residues include alanine 178 and aspartate 179. Aspartate 179 serves as a coordination point for Mg(2+).

This sequence belongs to the HpcH/HpaI aldolase family. KDR aldolase subfamily. Homohexamer. Mg(2+) serves as cofactor.

The catalysed reaction is 2-dehydro-3-deoxy-L-rhamnonate = (S)-lactaldehyde + pyruvate. Functionally, catalyzes the reversible retro-aldol cleavage of 2-keto-3-deoxy-L-rhamnonate (KDR) to pyruvate and lactaldehyde. In Shigella dysenteriae serotype 1 (strain Sd197), this protein is 2-keto-3-deoxy-L-rhamnonate aldolase.